We begin with the raw amino-acid sequence, 47 residues long: High light-inducible protein HliC (47 aa).

The Cytoplasmic segment spans residues 1-14 (MNNENSKFGFTAFA). The short motif at 15–20 (ENWNGR) is the Chlorophyll-binding motif element. Over 15–36 (ENWNGRLAMIGFSSALILELVS) the chain traverses the membrane. The Lumenal, thylakoid segment spans residues 37 to 47 (GQGVLHFFGIL).

This sequence belongs to the Hlip family. Forms heterodimers with both HliA and HliB; these are associated with photosystem II (PSII) assembly intermediates containing CP47 (psbB). In the absence of CP47 (psbB) and HliD, forms a homooligomer in vivo that binds 2 chlorophyll a and 1 beta-carotenoid per monomer. Cofractionates in an approximately 50 kDa fraction the thylakoid membrane with HliD. Associated in vivo with monomeric PSII. Purified in several chlorophyll- and carotenoid-containing complexes, including photosystem II (PSII) assembly intermediate complex RCII* (iD1, D1, D2, PsbE, PsbF, PsbI, Ycf39, Ycf48, HliC and HliD) and the Ycf39-Hlip complex (Ycf39, HliC, HliD and pigments).

The protein localises to the cellular thylakoid membrane. Its function is as follows. Forms a number of heteromers involved in photosystem II (PSII) assembly and/or repair under high light stress. Required for binding of chlorophyll and carotenoids by the Ycf39-Hlip complex. The Ycf39-Hlip complex binds D1 at an early stage of PSII assembly along with Ycf48, ribosomes and ChlG, the last enzyme in chlorophyll biosynthesis; it may be involved in chlorophyll reuse and delivery to D1 in the initial stages of PSII assembly. HliA-HliC and HliB-HliC heterodimers bind chlorophyll and carotenoids in a 1:0.6 ratio. Complexes bind mostly beta-carotenoid, but minor amounts of echinenone and beta-crytoxanthin are also detected. The complexes efficiently quench chlorophyll fluorescence, contributing to photoprotection. Deletion of 4 to 5 members of the Hlip family suggests the proteins are involved in regulation of chlorophyll biosynthesis, in stabilization of chlorophyll-binding proteins and/or in reuse of chlorophylls, and may regulate tetrapyrrole biosynthesis. Might bind chlorophyll and/or carotenoids in association with HliD (called the ScpBE pair). In terms of biological role, the Hlips might regulate tetrapyrrole biosynthesis, maybe at the level of aminolevulinic acid synthesis and probably stabilize PSII assembly intermediates. The polypeptide is High light-inducible protein HliC (hliC) (Synechocystis sp. (strain ATCC 27184 / PCC 6803 / Kazusa)).